We begin with the raw amino-acid sequence, 284 residues long: D-tagatose-1,6-bisphosphate aldolase subunit GatY (284 aa).

Catalysis depends on Asp82, which acts as the Proton donor. Zn(2+)-binding residues include His83 and His180. Gly181 contacts dihydroxyacetone phosphate. Residue His208 participates in Zn(2+) binding. Dihydroxyacetone phosphate contacts are provided by residues 209–211 and 230–233; these read GAS and NVAT.

It belongs to the class II fructose-bisphosphate aldolase family. TagBP aldolase GatY subfamily. In terms of assembly, forms a complex with GatZ. Requires Zn(2+) as cofactor.

The catalysed reaction is D-tagatofuranose 1,6-bisphosphate = D-glyceraldehyde 3-phosphate + dihydroxyacetone phosphate. Its pathway is carbohydrate metabolism; D-tagatose 6-phosphate degradation; D-glyceraldehyde 3-phosphate and glycerone phosphate from D-tagatose 6-phosphate: step 2/2. Its function is as follows. Catalytic subunit of the tagatose-1,6-bisphosphate aldolase GatYZ, which catalyzes the reversible aldol condensation of dihydroxyacetone phosphate (DHAP or glycerone-phosphate) with glyceraldehyde 3-phosphate (G3P) to produce tagatose 1,6-bisphosphate (TBP). Requires GatZ subunit for full activity and stability. Is involved in the catabolism of galactitol. In Salmonella newport (strain SL254), this protein is D-tagatose-1,6-bisphosphate aldolase subunit GatY.